The following is a 219-amino-acid chain: Endonuclease III (219 aa).

In terms of domain architecture, HhH spans 117-136 (MEELLTLPGVARKTANVVLA). Positions 197, 204, 207, and 213 each coordinate [4Fe-4S] cluster.

It belongs to the Nth/MutY family. Requires [4Fe-4S] cluster as cofactor.

The catalysed reaction is 2'-deoxyribonucleotide-(2'-deoxyribose 5'-phosphate)-2'-deoxyribonucleotide-DNA = a 3'-end 2'-deoxyribonucleotide-(2,3-dehydro-2,3-deoxyribose 5'-phosphate)-DNA + a 5'-end 5'-phospho-2'-deoxyribonucleoside-DNA + H(+). DNA repair enzyme that has both DNA N-glycosylase activity and AP-lyase activity. The DNA N-glycosylase activity releases various damaged pyrimidines from DNA by cleaving the N-glycosidic bond, leaving an AP (apurinic/apyrimidinic) site. The AP-lyase activity cleaves the phosphodiester bond 3' to the AP site by a beta-elimination, leaving a 3'-terminal unsaturated sugar and a product with a terminal 5'-phosphate. The sequence is that of Endonuclease III from Synechocystis sp. (strain ATCC 27184 / PCC 6803 / Kazusa).